The sequence spans 831 residues: Periplasmic nitrate reductase (831 aa).

The tat-type signal signal peptide spans 1-29; sequence MKFTRREFMKAQAAASAAAVAGIALPATA. The 4Fe-4S Mo/W bis-MGD-type domain occupies 41 to 97; sequence IKWEKAPCRFCGTGCSVLVGTQHGRVVATQGDPESPVNKGLNCVKGYFLSKIMYGKD. [4Fe-4S] cluster-binding residues include Cys-48, Cys-51, Cys-55, and Cys-83. Residues Lys-85, Gln-152, Asn-177, Cys-181, 214-221, 245-249, 264-266, Met-374, Gln-378, Asn-484, 510-511, Lys-533, Asp-560, and 720-729 contribute to the Mo-bis(molybdopterin guanine dinucleotide) site; these read WGSNMAEM, STYTH, QSD, SD, and TGRVLEHWHS. Substrate is bound at residue Trp-796. Positions 804 and 821 each coordinate Mo-bis(molybdopterin guanine dinucleotide).

The protein belongs to the prokaryotic molybdopterin-containing oxidoreductase family. NasA/NapA/NarB subfamily. In terms of assembly, component of the periplasmic nitrate reductase NapAB complex composed of NapA and NapB. It depends on [4Fe-4S] cluster as a cofactor. The cofactor is Mo-bis(molybdopterin guanine dinucleotide). Post-translationally, predicted to be exported by the Tat system. The position of the signal peptide cleavage has not been experimentally proven.

Its subcellular location is the periplasm. It carries out the reaction 2 Fe(II)-[cytochrome] + nitrate + 2 H(+) = 2 Fe(III)-[cytochrome] + nitrite + H2O. Catalytic subunit of the periplasmic nitrate reductase complex NapAB. Receives electrons from NapB and catalyzes the reduction of nitrate to nitrite. The chain is Periplasmic nitrate reductase from Psychromonas ingrahamii (strain DSM 17664 / CCUG 51855 / 37).